The primary structure comprises 272 residues: 2-C-methyl-D-erythritol 4-phosphate cytidylyltransferase (272 aa).

This sequence belongs to the IspD/TarI cytidylyltransferase family. IspD subfamily.

It catalyses the reaction 2-C-methyl-D-erythritol 4-phosphate + CTP + H(+) = 4-CDP-2-C-methyl-D-erythritol + diphosphate. It participates in isoprenoid biosynthesis; isopentenyl diphosphate biosynthesis via DXP pathway; isopentenyl diphosphate from 1-deoxy-D-xylulose 5-phosphate: step 2/6. Catalyzes the formation of 4-diphosphocytidyl-2-C-methyl-D-erythritol from CTP and 2-C-methyl-D-erythritol 4-phosphate (MEP). The protein is 2-C-methyl-D-erythritol 4-phosphate cytidylyltransferase of Xanthomonas oryzae pv. oryzae (strain MAFF 311018).